We begin with the raw amino-acid sequence, 1036 residues long: Presequence protease, mitochondrial (1036 aa).

The N-terminal 15 residues, Met-1 to Arg-15, are a transit peptide targeting the mitochondrion. A Zn(2+)-binding site is contributed by His-104. Residue Glu-107 is the Proton acceptor of the active site. Residues His-108 and Glu-205 each coordinate Zn(2+). Cysteines 119 and 556 form a disulfide. Lys-759 carries the N6-acetyllysine modification. At Lys-770 the chain carries N6-acetyllysine; alternate. Lys-770 is modified (N6-succinyllysine; alternate). The tract at residues Ser-806–Ser-833 is disordered. At Lys-848 the chain carries N6-succinyllysine. N6-acetyllysine is present on Lys-883. Lys-945 carries the N6-succinyllysine modification.

This sequence belongs to the peptidase M16 family. PreP subfamily. In terms of assembly, monomer and homodimer; homodimerization is induced by binding of the substrate. It depends on Zn(2+) as a cofactor. Post-translationally, a disulfide bond locks the enzyme in the closed conformation preventing substrate entry into the catalytic chamber.

Its subcellular location is the mitochondrion matrix. Mainly exists in a closed and catalytically competent conformation but a closed-to-open switch allows substrate entry into the catalytic chamber. Substrate binding induces closure and dimerization. A disulfide bond may lock the enzyme in a closed conformation preventing substrate entry into the catalytic chamber, participating in redox regulation of the enzyme. Inhibited by metal-chelating agents. Inhibited by nickel and zinc excess, and slightly activated by manganese. In terms of biological role, metalloendopeptidase of the mitochondrial matrix that functions in peptide cleavage and degradation rather than in protein processing. Has an ATP-independent activity. Specifically cleaves peptides in the range of 5 to 65 residues. Shows a preference for cleavage after small polar residues and before basic residues, but without any positional preference. Degrades the transit peptides of mitochondrial proteins after their cleavage. Also degrades other unstructured peptides. It is also able to degrade amyloid-beta protein 40, one of the peptides produced by APP processing, when it accumulates in mitochondrion. It is a highly efficient protease, at least toward amyloid-beta protein 40. Cleaves that peptide at a specific position and is probably not processive, releasing digested peptides intermediates that can be further cleaved subsequently. It is also able to degrade amyloid-beta protein 42. This Mus musculus (Mouse) protein is Presequence protease, mitochondrial.